The following is a 332-amino-acid chain: Delta-aminolevulinic acid dehydratase (332 aa).

The active-site Schiff-base intermediate with substrate is the Lys-199. Residues Arg-209 and Lys-221 each coordinate 5-aminolevulinate. Glu-237 provides a ligand contact to Mg(2+). Catalysis depends on Lys-252, which acts as the Schiff-base intermediate with substrate. 5-aminolevulinate-binding residues include Ser-278 and Tyr-317.

The protein belongs to the ALAD family. As to quaternary structure, homooctamer.

The enzyme catalyses 2 5-aminolevulinate = porphobilinogen + 2 H2O + H(+). The protein operates within porphyrin-containing compound metabolism; protoporphyrin-IX biosynthesis; coproporphyrinogen-III from 5-aminolevulinate: step 1/4. Catalyzes an early step in the biosynthesis of tetrapyrroles. Binds two molecules of 5-aminolevulinate per subunit, each at a distinct site, and catalyzes their condensation to form porphobilinogen. This chain is Delta-aminolevulinic acid dehydratase (hemB), found in Chlamydia pneumoniae (Chlamydophila pneumoniae).